Consider the following 104-residue polypeptide: Complex III assembly factor LYRM7 (104 aa).

It belongs to the complex I LYR family. Interacts with UQCRFS1.

It localises to the mitochondrion matrix. In terms of biological role, assembly factor required for Rieske Fe-S protein UQCRFS1 incorporation into the cytochrome b-c1 (CIII) complex. Functions as a chaperone, binding to this subunit within the mitochondrial matrix and stabilizing it prior to its translocation and insertion into the late CIII dimeric intermediate within the mitochondrial inner membrane. The sequence is that of Complex III assembly factor LYRM7 (LYRM7) from Danio rerio (Zebrafish).